The following is a 115-amino-acid chain: Large ribosomal subunit protein bL19 (115 aa).

The protein belongs to the bacterial ribosomal protein bL19 family.

In terms of biological role, this protein is located at the 30S-50S ribosomal subunit interface and may play a role in the structure and function of the aminoacyl-tRNA binding site. This chain is Large ribosomal subunit protein bL19, found in Streptococcus equi subsp. zooepidemicus (strain H70).